The primary structure comprises 256 residues: Homeobox protein Hox-D13a (256 aa).

The homeobox DNA-binding region spans 191–250 (GRKKRVPYTKFQLKELEREYNTTKFITKENRRRIASSTNLSERQVTIWFQNRRVKDKKRP).

It belongs to the Abd-B homeobox family.

Its subcellular location is the nucleus. Functionally, sequence-specific transcription factor which is part of a developmental regulatory system that provides cells with specific positional identities on the anterior-posterior axis. The chain is Homeobox protein Hox-D13a (hoxd13a) from Danio rerio (Zebrafish).